The following is a 323-amino-acid chain: Ethanolamine-phosphate cytidylyltransferase (323 aa).

This sequence belongs to the cytidylyltransferase family.

Its subcellular location is the cytoplasm. The protein localises to the nucleus. It catalyses the reaction phosphoethanolamine + CTP + H(+) = CDP-ethanolamine + diphosphate. The protein operates within phospholipid metabolism; phosphatidylethanolamine biosynthesis; phosphatidylethanolamine from ethanolamine: step 2/3. Ethanolamine-phosphate cytidylyltransferase which catalyzes the second step of phosphatidylethanolamine biosynthesis. Involved in the maintenance of plasma membrane and required for proper sporulation. In Saccharomyces cerevisiae (strain ATCC 204508 / S288c) (Baker's yeast), this protein is Ethanolamine-phosphate cytidylyltransferase.